The following is a 294-amino-acid chain: Nucleotide-binding protein lp_0779 (294 aa).

Position 12–19 (12–19) interacts with ATP; that stretch reads GMSGAGKT. 62-65 is a GTP binding site; the sequence is DLRS.

It belongs to the RapZ-like family.

Functionally, displays ATPase and GTPase activities. This is Nucleotide-binding protein lp_0779 from Lactiplantibacillus plantarum (strain ATCC BAA-793 / NCIMB 8826 / WCFS1) (Lactobacillus plantarum).